The sequence spans 387 residues: Synaptotagmin-8 (387 aa).

The Extracellular portion of the chain corresponds to 1–34; the sequence is MGHPPVSPSAPAPAGTTAIPGLIPDLVAGTPWPR. Residues 35–55 form a helical; Signal-anchor for type III membrane protein membrane-spanning segment; sequence WALIAGALAAGVLLVSCLLCA. Topologically, residues 56 to 387 are cytoplasmic; the sequence is ACCCCRRHRK…LRLRLPLPHS (332 aa). The disordered stretch occupies residues 70 to 99; the sequence is KESVGLGSARGTTTTHLVQPDVDGLESSPG. 2 C2 domains span residues 103–219 and 231–346; these read QWGC…EHWY and QVGE…QHWA.

The protein belongs to the synaptotagmin family. In terms of assembly, homodimer or homooligomer. Homodimerization and homooligomerization do not depend on Ca(2+). Interacts with SYNCRIP isoform 2 C-terminus. Binds inositol 1,3,4,5-tetrakisphosphate (IP4). Binds to AP2 in a Ca(2+)-independent manner. Interacts with STX1A, STX1B and STX2; the interaction is Ca(2+)-dependent.

It is found in the cell membrane. It localises to the cytoplasmic vesicle. The protein localises to the secretory vesicle. The protein resides in the acrosome. Functionally, involved in the trafficking and exocytosis of secretory vesicles in non-neuronal tissues. Mediates Ca(2+)-regulation of exocytosis acrosomal reaction in sperm. May mediate Ca(2+)-regulation of exocytosis in insulin secreted cells. The polypeptide is Synaptotagmin-8 (SYT8) (Homo sapiens (Human)).